A 137-amino-acid chain; its full sequence is Small ribosomal subunit protein uS11 (137 aa).

Residues 1 to 10 (MPPKSRSTGP) show a composition bias toward polar residues. Disordered regions lie at residues 1–27 (MPPK…IPHG) and 116–137 (GTIS…RRRV). The span at 12-21 (KTQKTRRRDK) shows a compositional bias: basic residues.

It belongs to the universal ribosomal protein uS11 family. As to quaternary structure, part of the 30S ribosomal subunit. Interacts with proteins S7 and S18. Binds to IF-3.

Functionally, located on the platform of the 30S subunit, it bridges several disparate RNA helices of the 16S rRNA. Forms part of the Shine-Dalgarno cleft in the 70S ribosome. The chain is Small ribosomal subunit protein uS11 from Rhodococcus erythropolis (strain PR4 / NBRC 100887).